A 430-amino-acid chain; its full sequence is Acetyl-CoA acetyltransferase FG05087, mitochondrial (430 aa).

Residues 1 to 32 (MTVTQLRSAGRLAQLAGHVNGARQFSTRPALR) constitute a mitochondrion transit peptide. Residue Cys-122 is the Acyl-thioester intermediate of the active site. Tyr-217 contributes to the K(+) binding site. Lys-260 contacts CoA. Residue Ala-278 coordinates K(+). Ser-282 lines the CoA pocket. Active-site proton acceptor residues include His-385 and Cys-413. Asn-414 serves as a coordination point for chloride.

Belongs to the thiolase-like superfamily. Thiolase family. As to quaternary structure, homotetramer. It depends on K(+) as a cofactor.

Its subcellular location is the mitochondrion. The enzyme catalyses 2 acetyl-CoA = acetoacetyl-CoA + CoA. Mitochondrial acetyl-CoA acetyltransferase that catalyzes both the formation and degradation of acetoacetyl-CoA. Seems not to be involved in ergosterol biosynthesis. Plays an important role in growth, morphogenesis and maintaining mitochondrial function including the response to oxidative stresses. In Gibberella zeae (strain ATCC MYA-4620 / CBS 123657 / FGSC 9075 / NRRL 31084 / PH-1) (Wheat head blight fungus), this protein is Acetyl-CoA acetyltransferase FG05087, mitochondrial.